Here is a 252-residue protein sequence, read N- to C-terminus: Chitooligosaccharide deacetylase (252 aa).

Histidine 61 and histidine 125 together coordinate Mg(2+).

It belongs to the YdjC deacetylase family. ChbG subfamily. As to quaternary structure, homodimer. It depends on Mg(2+) as a cofactor.

Its subcellular location is the cytoplasm. The enzyme catalyses N,N'-diacetylchitobiose + H2O = N-acetyl-beta-D-glucosaminyl-(1-&gt;4)-D-glucosamine + acetate. The catalysed reaction is diacetylchitobiose-6'-phosphate + H2O = N'-monoacetylchitobiose-6'-phosphate + acetate. It functions in the pathway glycan degradation; chitin degradation. In terms of biological role, involved in the degradation of chitin. ChbG is essential for growth on the acetylated chitooligosaccharides chitobiose and chitotriose but is dispensable for growth on cellobiose and chitosan dimer, the deacetylated form of chitobiose. Deacetylation of chitobiose-6-P and chitotriose-6-P is necessary for both the activation of the chb promoter by the regulatory protein ChbR and the hydrolysis of phosphorylated beta-glucosides by the phospho-beta-glucosidase ChbF. Catalyzes the removal of only one acetyl group from chitobiose-6-P to yield monoacetylchitobiose-6-P, the inducer of ChbR and the substrate of ChbF. This is Chitooligosaccharide deacetylase from Klebsiella pneumoniae subsp. pneumoniae (strain ATCC 700721 / MGH 78578).